The chain runs to 231 residues: Probable intron-encoded endonuclease 1 (231 aa).

Belongs to the LAGLIDADG endonuclease family.

The protein localises to the mitochondrion. Endonuclease involved in mitochondrial 21S rRNA gene intron homing. In Wickerhamomyces canadensis (Yeast), this protein is Probable intron-encoded endonuclease 1.